We begin with the raw amino-acid sequence, 409 residues long: NADH-quinone oxidoreductase subunit D (409 aa).

Belongs to the complex I 49 kDa subunit family. NDH-1 is composed of 14 different subunits. Subunits NuoB, C, D, E, F, and G constitute the peripheral sector of the complex.

The protein resides in the cell inner membrane. It carries out the reaction a quinone + NADH + 5 H(+)(in) = a quinol + NAD(+) + 4 H(+)(out). Functionally, NDH-1 shuttles electrons from NADH, via FMN and iron-sulfur (Fe-S) centers, to quinones in the respiratory chain. The immediate electron acceptor for the enzyme in this species is believed to be ubiquinone. Couples the redox reaction to proton translocation (for every two electrons transferred, four hydrogen ions are translocated across the cytoplasmic membrane), and thus conserves the redox energy in a proton gradient. The sequence is that of NADH-quinone oxidoreductase subunit D from Helicobacter pylori (strain HPAG1).